Reading from the N-terminus, the 492-residue chain is Probable cobyric acid synthase (492 aa).

In terms of domain architecture, GATase cobBQ-type spans 252-444 (PIEVNIVKFS…FHGILENFEF (193 aa)). The active-site Nucleophile is Cys330. Residue His436 is part of the active site.

This sequence belongs to the CobB/CobQ family. CobQ subfamily.

Its pathway is cofactor biosynthesis; adenosylcobalamin biosynthesis. Functionally, catalyzes amidations at positions B, D, E, and G on adenosylcobyrinic A,C-diamide. NH(2) groups are provided by glutamine, and one molecule of ATP is hydrogenolyzed for each amidation. This Methanococcus maripaludis (strain C6 / ATCC BAA-1332) protein is Probable cobyric acid synthase.